Consider the following 243-residue polypeptide: Segregation and condensation protein A (243 aa).

The protein belongs to the ScpA family. Component of a cohesin-like complex composed of ScpA, ScpB and the Smc homodimer, in which ScpA and ScpB bind to the head domain of Smc. The presence of the three proteins is required for the association of the complex with DNA.

The protein resides in the cytoplasm. In terms of biological role, participates in chromosomal partition during cell division. May act via the formation of a condensin-like complex containing Smc and ScpB that pull DNA away from mid-cell into both cell halves. This Halothermothrix orenii (strain H 168 / OCM 544 / DSM 9562) protein is Segregation and condensation protein A.